A 224-amino-acid chain; its full sequence is 4-aminobenzoate synthase (224 aa).

Fe(2+)-binding residues include E77, H84, E138, H169, D173, and H176.

It belongs to the CADD family. As to quaternary structure, homodimer. Fe(2+) is required as a cofactor. Mn(2+) serves as cofactor.

In terms of biological role, involved in de novo para-aminobenzoate (PABA) biosynthesis. Acts as a self-sacrificing or 'suicide' enzyme that utilizes its own active site tyrosine residue(s) as the substrate for PABA synthesis. The side chain of the tyrosine residue is released from the protein backbone via cleavage of the C(alpha)-C(beta) bond, leaving a glycine in place of the original tyrosine residue. Reaction requires O(2) and a reduced dimetal cofactor. The protein is 4-aminobenzoate synthase of Chlamydia pneumoniae (Chlamydophila pneumoniae).